A 125-amino-acid chain; its full sequence is Phosphoribosyl-AMP cyclohydrolase (125 aa).

A Mg(2+)-binding site is contributed by D74. Residue C75 coordinates Zn(2+). D76 and D78 together coordinate Mg(2+). Zn(2+) contacts are provided by C92 and C99.

It belongs to the PRA-CH family. In terms of assembly, homodimer. The cofactor is Mg(2+). It depends on Zn(2+) as a cofactor.

It is found in the cytoplasm. It carries out the reaction 1-(5-phospho-beta-D-ribosyl)-5'-AMP + H2O = 1-(5-phospho-beta-D-ribosyl)-5-[(5-phospho-beta-D-ribosylamino)methylideneamino]imidazole-4-carboxamide. It functions in the pathway amino-acid biosynthesis; L-histidine biosynthesis; L-histidine from 5-phospho-alpha-D-ribose 1-diphosphate: step 3/9. Catalyzes the hydrolysis of the adenine ring of phosphoribosyl-AMP. This chain is Phosphoribosyl-AMP cyclohydrolase, found in Desulforapulum autotrophicum (strain ATCC 43914 / DSM 3382 / VKM B-1955 / HRM2) (Desulfobacterium autotrophicum).